We begin with the raw amino-acid sequence, 467 residues long: tRNA(Ile)-lysidine synthase (467 aa).

26 to 31 (SGGPDS) contacts ATP.

It belongs to the tRNA(Ile)-lysidine synthase family.

It is found in the cytoplasm. It carries out the reaction cytidine(34) in tRNA(Ile2) + L-lysine + ATP = lysidine(34) in tRNA(Ile2) + AMP + diphosphate + H(+). Its function is as follows. Ligates lysine onto the cytidine present at position 34 of the AUA codon-specific tRNA(Ile) that contains the anticodon CAU, in an ATP-dependent manner. Cytidine is converted to lysidine, thus changing the amino acid specificity of the tRNA from methionine to isoleucine. The polypeptide is tRNA(Ile)-lysidine synthase (Clostridium tetani (strain Massachusetts / E88)).